Consider the following 768-residue polypeptide: DNA ligase (768 aa).

Residues 1 to 11 (MSPSAPANSAP) are compositionally biased toward low complexity. Residues 1-28 (MSPSAPANSAPDPDRNGVPDVGPASAAP) form a disordered region. NAD(+) contacts are provided by residues 62–66 (DAEYD), 111–112 (SI), and glutamate 148. Lysine 150 serves as the catalytic N6-AMP-lysine intermediate. 4 residues coordinate NAD(+): arginine 171, glutamate 238, lysine 361, and lysine 385. Residues cysteine 484, cysteine 487, cysteine 502, and cysteine 508 each coordinate Zn(2+). The BRCT domain maps to 670–759 (AAELPLAGKT…EADADADAEG (90 aa)).

The protein belongs to the NAD-dependent DNA ligase family. LigA subfamily. The cofactor is Mg(2+). Requires Mn(2+) as cofactor.

The catalysed reaction is NAD(+) + (deoxyribonucleotide)n-3'-hydroxyl + 5'-phospho-(deoxyribonucleotide)m = (deoxyribonucleotide)n+m + AMP + beta-nicotinamide D-nucleotide.. In terms of biological role, DNA ligase that catalyzes the formation of phosphodiester linkages between 5'-phosphoryl and 3'-hydroxyl groups in double-stranded DNA using NAD as a coenzyme and as the energy source for the reaction. It is essential for DNA replication and repair of damaged DNA. The protein is DNA ligase of Leptothrix cholodnii (strain ATCC 51168 / LMG 8142 / SP-6) (Leptothrix discophora (strain SP-6)).